We begin with the raw amino-acid sequence, 138 residues long: Protein FAM136A (138 aa).

Ala2 is modified (N-acetylalanine). 2 positions are modified to phosphothreonine: Thr124 and Thr126.

It belongs to the FAM136 family.

The chain is Protein FAM136A (Fam136a) from Rattus norvegicus (Rat).